Reading from the N-terminus, the 27-residue chain is L-amino-acid oxidase (27 aa).

Homodimer; non-covalently linked. It depends on FAD as a cofactor. In terms of processing, contains 2 disulfide bonds. N-glycosylated. As to expression, expressed by the venom gland.

It is found in the secreted. The catalysed reaction is an L-alpha-amino acid + O2 + H2O = a 2-oxocarboxylate + H2O2 + NH4(+). The enzyme catalyses L-leucine + O2 + H2O = 4-methyl-2-oxopentanoate + H2O2 + NH4(+). Catalyzes an oxidative deamination of predominantly hydrophobic and aromatic L-amino acids, thus producing hydrogen peroxide that may contribute to the diverse toxic effects of this enzyme. Shows activity on L-Leu. Exhibits diverse biological activities, such as hemolysis, edema, apoptosis, as well as induction of platelet aggregation. Effects of snake L-amino oxidases on platelets are controversial, since they either induce aggregation or inhibit agonist-induced aggregation. These different effects are probably due to different experimental conditions. Unlike other snake venom L-amino acid oxidases, does not induce hemorrhage. This protein may also have antibacterial and antiparasitic activities. This chain is L-amino-acid oxidase, found in Eristicophis macmahoni (Leaf-nosed viper).